Reading from the N-terminus, the 280-residue chain is 4-diphosphocytidyl-2-C-methyl-D-erythritol kinase (280 aa).

Lys8 is an active-site residue. 91-101 (PVAAGLAGGSA) provides a ligand contact to ATP. Residue Asp133 is part of the active site.

This sequence belongs to the GHMP kinase family. IspE subfamily.

It carries out the reaction 4-CDP-2-C-methyl-D-erythritol + ATP = 4-CDP-2-C-methyl-D-erythritol 2-phosphate + ADP + H(+). The protein operates within isoprenoid biosynthesis; isopentenyl diphosphate biosynthesis via DXP pathway; isopentenyl diphosphate from 1-deoxy-D-xylulose 5-phosphate: step 3/6. In terms of biological role, catalyzes the phosphorylation of the position 2 hydroxy group of 4-diphosphocytidyl-2C-methyl-D-erythritol. The protein is 4-diphosphocytidyl-2-C-methyl-D-erythritol kinase of Clostridium acetobutylicum (strain ATCC 824 / DSM 792 / JCM 1419 / IAM 19013 / LMG 5710 / NBRC 13948 / NRRL B-527 / VKM B-1787 / 2291 / W).